The primary structure comprises 292 residues: GTP cyclohydrolase FolE2 (292 aa).

It belongs to the GTP cyclohydrolase IV family.

The catalysed reaction is GTP + H2O = 7,8-dihydroneopterin 3'-triphosphate + formate + H(+). The protein operates within cofactor biosynthesis; 7,8-dihydroneopterin triphosphate biosynthesis; 7,8-dihydroneopterin triphosphate from GTP: step 1/1. Converts GTP to 7,8-dihydroneopterin triphosphate. This chain is GTP cyclohydrolase FolE2, found in Staphylococcus aureus (strain Newman).